Consider the following 500-residue polypeptide: Probable cytosol aminopeptidase (500 aa).

2 residues coordinate Mn(2+): K264 and D269. K276 is a catalytic residue. Mn(2+)-binding residues include D287, D346, and E348. R350 is an active-site residue.

This sequence belongs to the peptidase M17 family. Mn(2+) serves as cofactor.

The protein localises to the cytoplasm. The enzyme catalyses Release of an N-terminal amino acid, Xaa-|-Yaa-, in which Xaa is preferably Leu, but may be other amino acids including Pro although not Arg or Lys, and Yaa may be Pro. Amino acid amides and methyl esters are also readily hydrolyzed, but rates on arylamides are exceedingly low.. It carries out the reaction Release of an N-terminal amino acid, preferentially leucine, but not glutamic or aspartic acids.. Its function is as follows. Presumably involved in the processing and regular turnover of intracellular proteins. Catalyzes the removal of unsubstituted N-terminal amino acids from various peptides. This is Probable cytosol aminopeptidase from Rhodopseudomonas palustris (strain TIE-1).